The chain runs to 712 residues: Dipeptidyl-peptidase 7 (712 aa).

The signal sequence occupies residues 1-23; that stretch reads MQMKLKSILLGAALLLGASGVAK. The active-site Charge relay system is the histidine 89. Positions 136–173 form a coiled coil; that stretch reads TDKVEGQLKGITDEMERLRKAQEVCQELAKKENADENQ. Residues aspartate 225 and serine 648 each act as charge relay system in the active site.

It belongs to the peptidase S46 family.

It localises to the cell outer membrane. With respect to regulation, is inhibited in vitro by typical serine protease inhibitors like diisopropyl fluorophosphate, Pefablock, and 3,4-dichloroisocoumarin, but not by typical cysteine class inhibitors such as E-64 or iododoacetic acid. Its function is as follows. Catalyzes the removal of dipeptides from the N-terminus of oligopeptides. Shows a broad specificity for both aliphatic and aromatic residues in the P1 position, with glycine or proline being not acceptable in this position. Most potently cleaves the synthetic substrate Met-Leu-methylcoumaryl-7-amide (Met-Leu-MCA), Leu-Arg-MCA and Lys-Ala-MCA to a lesser extent. Is likely involved in amino acid metabolism and bacterial growth of asaccharolytic P.gingivalis, that utilizes amino acids from extracellular proteinaceous nutrients as energy and carbon sources. This Porphyromonas gingivalis (strain ATCC 33277 / DSM 20709 / CIP 103683 / JCM 12257 / NCTC 11834 / 2561) protein is Dipeptidyl-peptidase 7.